The following is a 230-amino-acid chain: Large ribosomal subunit protein uL1 (230 aa).

The protein belongs to the universal ribosomal protein uL1 family. In terms of assembly, part of the 50S ribosomal subunit.

Functionally, binds directly to 23S rRNA. The L1 stalk is quite mobile in the ribosome, and is involved in E site tRNA release. In terms of biological role, protein L1 is also a translational repressor protein, it controls the translation of the L11 operon by binding to its mRNA. The sequence is that of Large ribosomal subunit protein uL1 from Sulfurimonas denitrificans (strain ATCC 33889 / DSM 1251) (Thiomicrospira denitrificans (strain ATCC 33889 / DSM 1251)).